The sequence spans 175 residues: UPF0398 protein SSA_1858 (175 aa).

Belongs to the UPF0398 family.

The polypeptide is UPF0398 protein SSA_1858 (Streptococcus sanguinis (strain SK36)).